The chain runs to 159 residues: Transcriptional repressor NrdR (159 aa).

A zinc finger spans residues 3–34; that stretch reads CPFCEYNGTRVLDSRPFNHNKSIRRRRECEAC. The ATP-cone domain maps to 49-139; sequence LLIVKKDGTR…VYRQFKDINV (91 aa).

This sequence belongs to the NrdR family. Zn(2+) is required as a cofactor.

Functionally, negatively regulates transcription of bacterial ribonucleotide reductase nrd genes and operons by binding to NrdR-boxes. This is Transcriptional repressor NrdR from Brevibacillus brevis (strain 47 / JCM 6285 / NBRC 100599).